The primary structure comprises 876 residues: Monofunctional isopimaradiene synthase, chloroplastic (876 aa).

A chloroplast-targeting transit peptide spans Met-1–Ile-64. The Mg(2+) site is built by Asp-628, Asp-632, Asn-772, Thr-776, and Glu-780. The DDXXD motif signature appears at Asp-628 to Asp-632.

Belongs to the terpene synthase family. Tpsd subfamily. It depends on Mg(2+) as a cofactor.

The protein localises to the plastid. The protein resides in the chloroplast. It carries out the reaction (+)-copalyl diphosphate = isopimara-7,15-diene + diphosphate. The protein operates within terpene metabolism; oleoresin biosynthesis. In terms of biological role, involved in defensive oleoresin formation in conifers in response to insect attack or other injury. Involved in diterpene (C20) olefins biosynthesis. Monofunctional enzyme lacking the DXDD motif in the class II active site relevant for the cyclization of geranylgeranyl diphosphate (GGPP). Requires (+)-copalyl diphosphate ((+)-CPP) as substrate, but no activity with GGPP or ent-CPP. Isopimaradiene is the major products of the enzyme followed by sandaracopimaradiene. This is Monofunctional isopimaradiene synthase, chloroplastic from Pinus contorta (Shore pine).